We begin with the raw amino-acid sequence, 324 residues long: Glyoxylate/hydroxypyruvate reductase B (324 aa).

Catalysis depends on residues R237 and E266. H285 (proton donor) is an active-site residue.

Belongs to the D-isomer specific 2-hydroxyacid dehydrogenase family. GhrB subfamily. Homodimer.

Its subcellular location is the cytoplasm. The enzyme catalyses glycolate + NADP(+) = glyoxylate + NADPH + H(+). It carries out the reaction (R)-glycerate + NAD(+) = 3-hydroxypyruvate + NADH + H(+). It catalyses the reaction (R)-glycerate + NADP(+) = 3-hydroxypyruvate + NADPH + H(+). Catalyzes the NADPH-dependent reduction of glyoxylate and hydroxypyruvate into glycolate and glycerate, respectively. In Salmonella gallinarum (strain 287/91 / NCTC 13346), this protein is Glyoxylate/hydroxypyruvate reductase B.